A 390-amino-acid polypeptide reads, in one-letter code: Purine permease 21 (390 aa).

Positions 12–34 (QQGKEPIPTDQDERSSVSGSQTK) are disordered. A run of 10 helical transmembrane segments spans residues 44-64 (WLRV…ATIL), 78-98 (LATV…LLSV), 118-138 (LVYI…SIGL), 140-160 (YLPV…TAFF), 169-189 (LTPI…LLAF), 204-224 (YVKG…LLSL), 241-261 (VINM…VGLF), 287-307 (LVWT…LIFE), 312-332 (FSNA…VIIF), and 336-356 (MNGL…SYVY). The segment at 367–390 (KSNEIPTTESPDRPEAEGSSEQSK) is disordered.

The protein belongs to the purine permeases (TC 2.A.7.14) family. In terms of tissue distribution, expressed in mesophyll cells.

The protein resides in the membrane. The polypeptide is Purine permease 21 (Arabidopsis thaliana (Mouse-ear cress)).